The chain runs to 229 residues: NAD(P)H-hydrate epimerase (229 aa).

The YjeF N-terminal domain maps to 9 to 216 (AISVDEELFN…KLEEKYAMNL (208 aa)). 59-63 (NNGGD) serves as a coordination point for (6S)-NADPHX. K(+) contacts are provided by N60 and D124. Residues 128–134 (GFSFKPP) and D157 each bind (6S)-NADPHX. S160 contributes to the K(+) binding site.

The protein belongs to the NnrE/AIBP family. It depends on K(+) as a cofactor.

It catalyses the reaction (6R)-NADHX = (6S)-NADHX. The catalysed reaction is (6R)-NADPHX = (6S)-NADPHX. Functionally, catalyzes the epimerization of the S- and R-forms of NAD(P)HX, a damaged form of NAD(P)H that is a result of enzymatic or heat-dependent hydration. This is a prerequisite for the S-specific NAD(P)H-hydrate dehydratase to allow the repair of both epimers of NAD(P)HX. In Anopheles gambiae (African malaria mosquito), this protein is NAD(P)H-hydrate epimerase.